The sequence spans 204 residues: 3-isopropylmalate dehydratase small subunit (204 aa).

Belongs to the LeuD family. LeuD type 1 subfamily. In terms of assembly, heterodimer of LeuC and LeuD.

The enzyme catalyses (2R,3S)-3-isopropylmalate = (2S)-2-isopropylmalate. It participates in amino-acid biosynthesis; L-leucine biosynthesis; L-leucine from 3-methyl-2-oxobutanoate: step 2/4. In terms of biological role, catalyzes the isomerization between 2-isopropylmalate and 3-isopropylmalate, via the formation of 2-isopropylmaleate. The protein is 3-isopropylmalate dehydratase small subunit of Psychromonas ingrahamii (strain DSM 17664 / CCUG 51855 / 37).